The chain runs to 136 residues: DUF35 domain-containing scaffold protein (136 aa).

3 residues coordinate Zn(2+): C25, C38, and C41.

It belongs to the scaffold protein DUF35 family. Interacts with acetoacetyl-CoA thiolase and HMG-CoA synthase (HMGCS) that catalyzes the first and second step in the mevalonate pathway, respectively.

Its function is as follows. Functions as a scaffold to connect the acetoacetyl-CoA thiolase and HMG-CoA synthase (HMGCS) dimers in the channeling thiolase/HMGCS complex, which allows for efficient coupling of the endergonic thiolase reaction with the exergonic HMGCS reaction. The chain is DUF35 domain-containing scaffold protein from Pyrococcus furiosus (strain ATCC 43587 / DSM 3638 / JCM 8422 / Vc1).